Consider the following 661-residue polypeptide: 1-deoxy-D-xylulose-5-phosphate synthase (661 aa).

Thiamine diphosphate contacts are provided by residues histidine 98 and 139–141 (AHS). Aspartate 170 serves as a coordination point for Mg(2+). Residues 171–172 (GA), asparagine 199, tyrosine 309, and glutamate 391 each bind thiamine diphosphate. Asparagine 199 provides a ligand contact to Mg(2+).

The protein belongs to the transketolase family. DXPS subfamily. Homodimer. The cofactor is Mg(2+). Thiamine diphosphate serves as cofactor.

The enzyme catalyses D-glyceraldehyde 3-phosphate + pyruvate + H(+) = 1-deoxy-D-xylulose 5-phosphate + CO2. It functions in the pathway metabolic intermediate biosynthesis; 1-deoxy-D-xylulose 5-phosphate biosynthesis; 1-deoxy-D-xylulose 5-phosphate from D-glyceraldehyde 3-phosphate and pyruvate: step 1/1. Its function is as follows. Catalyzes the acyloin condensation reaction between C atoms 2 and 3 of pyruvate and glyceraldehyde 3-phosphate to yield 1-deoxy-D-xylulose-5-phosphate (DXP). This chain is 1-deoxy-D-xylulose-5-phosphate synthase, found in Bradyrhizobium diazoefficiens (strain JCM 10833 / BCRC 13528 / IAM 13628 / NBRC 14792 / USDA 110).